The primary structure comprises 179 residues: Large ribosomal subunit protein uL6 (179 aa).

It belongs to the universal ribosomal protein uL6 family. Part of the 50S ribosomal subunit.

This protein binds to the 23S rRNA, and is important in its secondary structure. It is located near the subunit interface in the base of the L7/L12 stalk, and near the tRNA binding site of the peptidyltransferase center. The protein is Large ribosomal subunit protein uL6 of Bacillus velezensis (strain DSM 23117 / BGSC 10A6 / LMG 26770 / FZB42) (Bacillus amyloliquefaciens subsp. plantarum).